A 279-amino-acid polypeptide reads, in one-letter code: MKTIECKAPAKVNYRLDVLRRRPDGYHDLRMIMQRIDLCDDIRISLSETPGVRVACGKEGVPDGPGNIAWRAADALLKLSGRCTGIDISIVKNIPVAAGLGGGSSDCASALMGVNELLELHLTDEQLMEAGSKLGADVPFFIFKKTALAEGIGDKLAAVEAAPAWLVIVNPNLAVSTAWVYQNLQLTAGKDEYIIPRFYGSVSDICAILANDLEKVTIGRFPVINQIKQKLLQVGAAGSLMSGSGSTVFGIFAEEAPARKAAEKLSRESDWFVAAVKTL.

Lysine 11 is a catalytic residue. Proline 95–serine 105 provides a ligand contact to ATP. Aspartate 137 is a catalytic residue.

This sequence belongs to the GHMP kinase family. IspE subfamily.

It catalyses the reaction 4-CDP-2-C-methyl-D-erythritol + ATP = 4-CDP-2-C-methyl-D-erythritol 2-phosphate + ADP + H(+). The protein operates within isoprenoid biosynthesis; isopentenyl diphosphate biosynthesis via DXP pathway; isopentenyl diphosphate from 1-deoxy-D-xylulose 5-phosphate: step 3/6. Catalyzes the phosphorylation of the position 2 hydroxy group of 4-diphosphocytidyl-2C-methyl-D-erythritol. The protein is 4-diphosphocytidyl-2-C-methyl-D-erythritol kinase of Geotalea daltonii (strain DSM 22248 / JCM 15807 / FRC-32) (Geobacter daltonii).